A 616-amino-acid polypeptide reads, in one-letter code: UvrABC system protein C (616 aa).

Positions Ala11–Val85 constitute a GIY-YIG domain. A UVR domain is found at Ala194–Leu229.

Belongs to the UvrC family. In terms of assembly, interacts with UvrB in an incision complex.

It is found in the cytoplasm. The UvrABC repair system catalyzes the recognition and processing of DNA lesions. UvrC both incises the 5' and 3' sides of the lesion. The N-terminal half is responsible for the 3' incision and the C-terminal half is responsible for the 5' incision. The chain is UvrABC system protein C from Deinococcus geothermalis (strain DSM 11300 / CIP 105573 / AG-3a).